The following is a 77-amino-acid chain: uncharacterized protein (77 aa).

This is an uncharacterized protein from Rickettsia prowazekii (strain Madrid E).